The following is an 861-amino-acid chain: DNA mismatch repair protein MutS (861 aa).

ATP is bound at residue 618–625 (GPNMGGKS).

The protein belongs to the DNA mismatch repair MutS family.

Functionally, this protein is involved in the repair of mismatches in DNA. It is possible that it carries out the mismatch recognition step. This protein has a weak ATPase activity. This chain is DNA mismatch repair protein MutS, found in Shewanella frigidimarina (strain NCIMB 400).